Consider the following 62-residue polypeptide: Cytotoxin-like basic protein (62 aa).

Disulfide bonds link C3–C22, C15–C40, C44–C55, and C56–C61.

The protein belongs to the three-finger toxin family. Short-chain subfamily. Orphan group XV sub-subfamily. As to expression, expressed by the venom gland.

It localises to the secreted. The protein localises to the target cell membrane. Its function is as follows. Has low cytotoxic activity. The protein is Cytotoxin-like basic protein of Naja naja (Indian cobra).